A 345-amino-acid polypeptide reads, in one-letter code: Probable aldo-keto reductase 4 (345 aa).

Tyr63 serves as the catalytic Proton donor. Residue His130 participates in substrate binding. NADP(+) is bound at residue 209–219 (SPLGRGFFASG).

The protein belongs to the aldo/keto reductase family.

The protein is Probable aldo-keto reductase 4 of Arabidopsis thaliana (Mouse-ear cress).